Reading from the N-terminus, the 302-residue chain is 4-hydroxy-tetrahydrodipicolinate synthase (302 aa).

Thr44 lines the pyruvate pocket. The Proton donor/acceptor role is filled by Tyr132. The active-site Schiff-base intermediate with substrate is the Lys160. Position 202 (Val202) interacts with pyruvate.

This sequence belongs to the DapA family. As to quaternary structure, homotetramer; dimer of dimers.

Its subcellular location is the cytoplasm. It carries out the reaction L-aspartate 4-semialdehyde + pyruvate = (2S,4S)-4-hydroxy-2,3,4,5-tetrahydrodipicolinate + H2O + H(+). It functions in the pathway amino-acid biosynthesis; L-lysine biosynthesis via DAP pathway; (S)-tetrahydrodipicolinate from L-aspartate: step 3/4. Its function is as follows. Catalyzes the condensation of (S)-aspartate-beta-semialdehyde [(S)-ASA] and pyruvate to 4-hydroxy-tetrahydrodipicolinate (HTPA). This chain is 4-hydroxy-tetrahydrodipicolinate synthase, found in Thermomicrobium roseum (strain ATCC 27502 / DSM 5159 / P-2).